Here is a 763-residue protein sequence, read N- to C-terminus: Probable ubiquitin carboxyl-terminal hydrolase MINDY-4 (763 aa).

The residue at position 143 (Ser143) is a Phosphoserine. The segment at 154–368 is disordered; sequence SSKRSSHKSR…SQPASLRKNQ (215 aa). The span at 180–202 shows a compositional bias: basic and acidic residues; the sequence is EKTDKLPMSEPSLDTKRMGEKVR. Phosphoserine occurs at positions 220 and 224. Positions 252–261 are enriched in polar residues; it reads ELSTHTSTCP. Residues 267–278 are compositionally biased toward low complexity; it reads PASSTASTSRSP. Ser296 carries the phosphoserine modification. Residues 346-355 show a composition bias toward basic and acidic residues; that stretch reads TQERPERAFE. Positions 357–368 are enriched in polar residues; the sequence is QGSQPASLRKNQ. Residue Cys463 is the Nucleophile of the active site. His683 (proton acceptor) is an active-site residue.

It belongs to the MINDY deubiquitinase family. FAM188 subfamily.

It catalyses the reaction Thiol-dependent hydrolysis of ester, thioester, amide, peptide and isopeptide bonds formed by the C-terminal Gly of ubiquitin (a 76-residue protein attached to proteins as an intracellular targeting signal).. Probable hydrolase that can remove 'Lys-48'-linked conjugated ubiquitin from proteins. This is Probable ubiquitin carboxyl-terminal hydrolase MINDY-4 (MINDY4) from Bos taurus (Bovine).